Here is a 255-residue protein sequence, read N- to C-terminus: Large ribosomal subunit protein uL4 (255 aa).

This sequence belongs to the universal ribosomal protein uL4 family. As to quaternary structure, part of the 50S ribosomal subunit.

Functionally, one of the primary rRNA binding proteins, this protein initially binds near the 5'-end of the 23S rRNA. It is important during the early stages of 50S assembly. It makes multiple contacts with different domains of the 23S rRNA in the assembled 50S subunit and ribosome. Its function is as follows. Forms part of the polypeptide exit tunnel. The polypeptide is Large ribosomal subunit protein uL4 (Thermococcus onnurineus (strain NA1)).